The sequence spans 404 residues: Glucose-1-phosphate adenylyltransferase (404 aa).

Residues Tyr-99, Gly-164, 179–180 (EK), and Ser-197 contribute to the alpha-D-glucose 1-phosphate site.

The protein belongs to the bacterial/plant glucose-1-phosphate adenylyltransferase family.

The catalysed reaction is alpha-D-glucose 1-phosphate + ATP + H(+) = ADP-alpha-D-glucose + diphosphate. It participates in glycan biosynthesis; glycogen biosynthesis. Functionally, involved in the biosynthesis of ADP-glucose building block, required in the biosynthesis of maltose-1-phosphate (M1P) and in the elongation reactions to produce linear alpha-1,4-glucans. Catalyzes the reaction between ATP and alpha-D-glucose 1-phosphate (G1P) to produce pyrophosphate and ADP-Glc. The sequence is that of Glucose-1-phosphate adenylyltransferase from Mycolicibacterium smegmatis (strain ATCC 700084 / mc(2)155) (Mycobacterium smegmatis).